A 227-amino-acid chain; its full sequence is SPbeta prophage-derived uncharacterized membrane protein YomJ (227 aa).

Helical transmembrane passes span 16–36 (LFFLLMDGWRGMGICLIIVGL) and 131–151 (GIVAGGLLAGGIGAAIGGLSA).

The protein resides in the cell membrane. The chain is SPbeta prophage-derived uncharacterized membrane protein YomJ (yomJ) from Bacillus subtilis (strain 168).